Here is a 152-residue protein sequence, read N- to C-terminus: Protein Smg homolog (152 aa).

It belongs to the Smg family.

The protein is Protein Smg homolog of Bordetella bronchiseptica (strain ATCC BAA-588 / NCTC 13252 / RB50) (Alcaligenes bronchisepticus).